A 213-amino-acid chain; its full sequence is dITP/XTP pyrophosphatase (213 aa).

17 to 22 (SNNAGK) contacts substrate. Aspartate 78 (proton acceptor) is an active-site residue. Aspartate 78 is a binding site for Mg(2+). Residues serine 79, 164–167 (FGYD), lysine 187, and 192–193 (HR) each bind substrate.

Belongs to the HAM1 NTPase family. As to quaternary structure, homodimer. It depends on Mg(2+) as a cofactor.

It catalyses the reaction XTP + H2O = XMP + diphosphate + H(+). The catalysed reaction is dITP + H2O = dIMP + diphosphate + H(+). It carries out the reaction ITP + H2O = IMP + diphosphate + H(+). In terms of biological role, pyrophosphatase that catalyzes the hydrolysis of nucleoside triphosphates to their monophosphate derivatives, with a high preference for the non-canonical purine nucleotides XTP (xanthosine triphosphate), dITP (deoxyinosine triphosphate) and ITP. Seems to function as a house-cleaning enzyme that removes non-canonical purine nucleotides from the nucleotide pool, thus preventing their incorporation into DNA/RNA and avoiding chromosomal lesions. In Bordetella parapertussis (strain 12822 / ATCC BAA-587 / NCTC 13253), this protein is dITP/XTP pyrophosphatase.